We begin with the raw amino-acid sequence, 474 residues long: Gamma-aminobutyric acid receptor subunit beta-1 (474 aa).

The N-terminal stretch at 1–25 (MWTVQNRESLGLLSFPVMITMVCCA) is a signal peptide. Residues 26–245 (HSTNEPSNMS…SFRLKRNIGY (220 aa)) lie on the Extracellular side of the membrane. A glycan (N-linked (GlcNAc...) asparagine) is linked at N105. Residue Y122 participates in histamine binding. C161 and C175 form a disulfide bridge. N174 is a glycosylation site (N-linked (GlcNAc...) asparagine). Residues 181 to 182 (SY) and T227 each bind histamine. 4-aminobutanoate is bound by residues Y182 and T227. Helical transmembrane passes span 246–267 (FILQ…SFWI), 271–293 (ASAA…STHL), and 305–327 (AIDI…YAFV). The Cytoplasmic segment spans residues 328-451 (NYIFFGKGPQ…DLTDVNSIDK (124 aa)). Residues 452–473 (WSRMFFPITFSLFNVVYWLYYV) form a helical membrane-spanning segment.

This sequence belongs to the ligand-gated ion channel (TC 1.A.9) family. Gamma-aminobutyric acid receptor (TC 1.A.9.5) subfamily. GABRB1 sub-subfamily. As to quaternary structure, heteropentamer, formed by a combination of alpha (GABRA1-6), beta (GABRB1-3), gamma (GABRG1-3), delta (GABRD), epsilon (GABRE), rho (GABRR1-3), pi (GABRP) and theta (GABRQ) chains, each subunit exhibiting distinct physiological and pharmacological properties. Binds UBQLN1.

The protein resides in the postsynaptic cell membrane. Its subcellular location is the cell membrane. The catalysed reaction is chloride(in) = chloride(out). Potentiated by etomidate, propofol, pregnanolone and flurazepam. Potentiated by histamine. In terms of biological role, beta subunit of the heteropentameric ligand-gated chloride channel gated by gamma-aminobutyric acid (GABA), a major inhibitory neurotransmitter in the brain. GABA-gated chloride channels, also named GABA(A) receptors (GABAAR), consist of five subunits arranged around a central pore and contain one or two GABA active binding sites located at the alpha and beta subunit interfaces, depending on subunit composition. When activated by GABA, GABAARs selectively allow the flow of chloride anions across the cell membrane down their electrochemical gradient. Chloride influx into the postsynaptic neuron following GABAAR opening decreases the neuron ability to generate a new action potential, thereby reducing nerve transmission. Beta-containing GABAARs can simultaneously bind GABA and histamine where histamine binds at the interface of two neighboring beta subunits, which may be involved in the regulation of sleep and wakefulness. The chain is Gamma-aminobutyric acid receptor subunit beta-1 from Homo sapiens (Human).